The following is a 121-amino-acid chain: Large ribosomal subunit protein bL12 (121 aa).

It belongs to the bacterial ribosomal protein bL12 family. In terms of assembly, homodimer. Part of the ribosomal stalk of the 50S ribosomal subunit. Forms a multimeric L10(L12)X complex, where L10 forms an elongated spine to which 2 to 4 L12 dimers bind in a sequential fashion. Binds GTP-bound translation factors.

In terms of biological role, forms part of the ribosomal stalk which helps the ribosome interact with GTP-bound translation factors. Is thus essential for accurate translation. This is Large ribosomal subunit protein bL12 from Erwinia tasmaniensis (strain DSM 17950 / CFBP 7177 / CIP 109463 / NCPPB 4357 / Et1/99).